The chain runs to 349 residues: Ribosomal RNA small subunit methyltransferase H (349 aa).

Residues 34–36, Asp54, Phe81, Asp102, and Gln109 each bind S-adenosyl-L-methionine; that span reads GGH.

Belongs to the methyltransferase superfamily. RsmH family.

It localises to the cytoplasm. The catalysed reaction is cytidine(1402) in 16S rRNA + S-adenosyl-L-methionine = N(4)-methylcytidine(1402) in 16S rRNA + S-adenosyl-L-homocysteine + H(+). Functionally, specifically methylates the N4 position of cytidine in position 1402 (C1402) of 16S rRNA. This is Ribosomal RNA small subunit methyltransferase H from Dehalococcoides mccartyi (strain ATCC BAA-2266 / KCTC 15142 / 195) (Dehalococcoides ethenogenes (strain 195)).